Consider the following 186-residue polypeptide: Tumor necrosis factor alpha-induced protein 8-like protein 1 (186 aa).

This sequence belongs to the TNFAIP8 family. As to quaternary structure, interacts with FBXW5; TNFAIP8L1 competes with TSC2 to bind FBXW5 increasing TSC2 stability by preventing its ubiquitination. In terms of tissue distribution, high expression detected in most carcinoma cell lines, especially in cells transformed with virus genomes.

The protein resides in the cytoplasm. Acts as a negative regulator of mTOR activity. The sequence is that of Tumor necrosis factor alpha-induced protein 8-like protein 1 (TNFAIP8L1) from Homo sapiens (Human).